We begin with the raw amino-acid sequence, 65 residues long: Large ribosomal subunit protein uL29 (65 aa).

The protein belongs to the universal ribosomal protein uL29 family.

This Acidovorax ebreus (strain TPSY) (Diaphorobacter sp. (strain TPSY)) protein is Large ribosomal subunit protein uL29.